Reading from the N-terminus, the 467-residue chain is Glutamate--tRNA ligase (467 aa).

The 'HIGH' region signature appears at 13-23; it reads PSPTGYLHVGG. The 'KMSKS' region motif lies at 245–249; the sequence is KLSKR. An ATP-binding site is contributed by K248.

This sequence belongs to the class-I aminoacyl-tRNA synthetase family. Glutamate--tRNA ligase type 1 subfamily. Monomer.

It localises to the cytoplasm. It carries out the reaction tRNA(Glu) + L-glutamate + ATP = L-glutamyl-tRNA(Glu) + AMP + diphosphate. Its function is as follows. Catalyzes the attachment of glutamate to tRNA(Glu) in a two-step reaction: glutamate is first activated by ATP to form Glu-AMP and then transferred to the acceptor end of tRNA(Glu). This Herminiimonas arsenicoxydans protein is Glutamate--tRNA ligase.